An 854-amino-acid polypeptide reads, in one-letter code: DNA mismatch repair protein MutS (854 aa).

ATP is bound at residue 608 to 615 (GPNMAGKS).

This sequence belongs to the DNA mismatch repair MutS family.

Functionally, this protein is involved in the repair of mismatches in DNA. It is possible that it carries out the mismatch recognition step. This protein has a weak ATPase activity. This chain is DNA mismatch repair protein MutS, found in Leuconostoc mesenteroides subsp. mesenteroides (strain ATCC 8293 / DSM 20343 / BCRC 11652 / CCM 1803 / JCM 6124 / NCDO 523 / NBRC 100496 / NCIMB 8023 / NCTC 12954 / NRRL B-1118 / 37Y).